A 391-amino-acid chain; its full sequence is Thioredoxin-interacting protein (391 aa).

Lysine 212 is covalently cross-linked (Glycyl lysine isopeptide (Lys-Gly) (interchain with G-Cter in ubiquitin)). Residue serine 361 is modified to Phosphoserine.

This sequence belongs to the arrestin family. As to quaternary structure, homodimer; disulfide-linked. Interacts with TXN/thioredoxin through its redox-active site. Interacts with transcriptional repressors ZBTB16, ZBTB32 and HDAC1. Interacts with DDIT4. Post-translationally, ubiquitinated; undergoes heterotypic 'Lys-48'-/'Lys-63'-branched polyubiquitination catalyzed by ITCH and UBR5 resulting in proteasomal degradation. Deubiquitinated by USP5, leading to TXNIP stabilization.

The protein resides in the cytoplasm. Its function is as follows. May act as an oxidative stress mediator by inhibiting thioredoxin activity or by limiting its bioavailability. Interacts with COPS5 and restores COPS5-induced suppression of CDKN1B stability, blocking the COPS5-mediated translocation of CDKN1B from the nucleus to the cytoplasm. Functions as a transcriptional repressor, possibly by acting as a bridge molecule between transcription factors and corepressor complexes, and over-expression will induce G0/G1 cell cycle arrest. Required for the maturation of natural killer cells. Acts as a suppressor of tumor cell growth. Inhibits the proteasomal degradation of DDIT4, and thereby contributes to the inhibition of the mammalian target of rapamycin complex 1 (mTORC1). The protein is Thioredoxin-interacting protein (TXNIP) of Pongo abelii (Sumatran orangutan).